Reading from the N-terminus, the 213-residue chain is Adenylate kinase (213 aa).

10–15 lines the ATP pocket; that stretch reads GAGKGT. Residues 30-59 form an NMP region; that stretch reads STGDMLRAAVAAGSEVGLRAKAAMESGSLV. AMP-binding positions include threonine 31, arginine 36, 57-59, 85-88, and glutamine 92; these read SLV and GFPR. Residues 126–163 are LID; the sequence is GRSSCEKCGEGYHDSFKPSAQPNVCDKCSGTLKRRADD. Arginine 127 contributes to the ATP binding site. The Zn(2+) site is built by cysteine 130, cysteine 133, cysteine 150, and cysteine 153. Arginine 160 and arginine 171 together coordinate AMP. Glutamine 199 lines the ATP pocket.

It belongs to the adenylate kinase family. In terms of assembly, monomer.

The protein localises to the cytoplasm. The enzyme catalyses AMP + ATP = 2 ADP. It functions in the pathway purine metabolism; AMP biosynthesis via salvage pathway; AMP from ADP: step 1/1. Its function is as follows. Catalyzes the reversible transfer of the terminal phosphate group between ATP and AMP. Plays an important role in cellular energy homeostasis and in adenine nucleotide metabolism. The protein is Adenylate kinase of Magnetococcus marinus (strain ATCC BAA-1437 / JCM 17883 / MC-1).